The following is a 196-amino-acid chain: dTDP-4-dehydro-6-deoxyglucose 3-epimerase (196 aa).

Residues Arg-21, Glu-26, 45–47, and Arg-57 contribute to the substrate site; that span reads QVN. His-60 (proton acceptor) is an active-site residue. Substrate contacts are provided by Lys-70 and Arg-117. The active-site Proton donor is Tyr-130. The substrate site is built by Glu-141 and Arg-166.

It belongs to the dTDP-4-dehydrorhamnose 3,5-epimerase family. Homodimer.

The catalysed reaction is dTDP-4-dehydro-6-deoxy-alpha-D-glucose = dTDP-4-dehydro-6-deoxy-alpha-D-allose. Its pathway is antibiotic biosynthesis. In terms of biological role, involved in the biosynthesis of dTDP-6-deoxy-D-allose, an intermediate in the biosynthesis of mycinose, which is one of the two unusual sugars attached to the 16-membered macrolactone ring of the aglycone antibiotic dihydrochalcomycin (GERI-155). Catalyzes the conversion of dTDP-4-oxo-6-deoxyglucose to dTDP-4-oxo-6-deoxyallose, via a C-3 epimerization. This chain is dTDP-4-dehydro-6-deoxyglucose 3-epimerase, found in Streptomyces sp.